The chain runs to 334 residues: Holliday junction branch migration complex subunit RuvB (334 aa).

Positions 1–180 (MSEFLTPERT…FGIILELDFY (180 aa)) are large ATPase domain (RuvB-L). ATP contacts are provided by residues Leu-19, Arg-20, Gly-61, Lys-64, Thr-65, Thr-66, 127–129 (EDF), Arg-170, Tyr-180, and Arg-217. Thr-65 is a binding site for Mg(2+). A small ATPAse domain (RuvB-S) region spans residues 181–251 (TVKELKEIIK…IVLKTMEVLN (71 aa)). Residues 254–334 (AEGLDEFDRK…KYEVPENRLF (81 aa)) form a head domain (RuvB-H) region. DNA-binding residues include Arg-309 and Arg-314.

This sequence belongs to the RuvB family. Homohexamer. Forms an RuvA(8)-RuvB(12)-Holliday junction (HJ) complex. HJ DNA is sandwiched between 2 RuvA tetramers; dsDNA enters through RuvA and exits via RuvB. An RuvB hexamer assembles on each DNA strand where it exits the tetramer. Each RuvB hexamer is contacted by two RuvA subunits (via domain III) on 2 adjacent RuvB subunits; this complex drives branch migration. In the full resolvosome a probable DNA-RuvA(4)-RuvB(12)-RuvC(2) complex forms which resolves the HJ.

It localises to the cytoplasm. It catalyses the reaction ATP + H2O = ADP + phosphate + H(+). Functionally, the RuvA-RuvB-RuvC complex processes Holliday junction (HJ) DNA during genetic recombination and DNA repair, while the RuvA-RuvB complex plays an important role in the rescue of blocked DNA replication forks via replication fork reversal (RFR). RuvA specifically binds to HJ cruciform DNA, conferring on it an open structure. The RuvB hexamer acts as an ATP-dependent pump, pulling dsDNA into and through the RuvAB complex. RuvB forms 2 homohexamers on either side of HJ DNA bound by 1 or 2 RuvA tetramers; 4 subunits per hexamer contact DNA at a time. Coordinated motions by a converter formed by DNA-disengaged RuvB subunits stimulates ATP hydrolysis and nucleotide exchange. Immobilization of the converter enables RuvB to convert the ATP-contained energy into a lever motion, pulling 2 nucleotides of DNA out of the RuvA tetramer per ATP hydrolyzed, thus driving DNA branch migration. The RuvB motors rotate together with the DNA substrate, which together with the progressing nucleotide cycle form the mechanistic basis for DNA recombination by continuous HJ branch migration. Branch migration allows RuvC to scan DNA until it finds its consensus sequence, where it cleaves and resolves cruciform DNA. This chain is Holliday junction branch migration complex subunit RuvB, found in Thermotoga petrophila (strain ATCC BAA-488 / DSM 13995 / JCM 10881 / RKU-1).